Reading from the N-terminus, the 130-residue chain is Small ribosomal subunit protein uS9 (130 aa).

It belongs to the universal ribosomal protein uS9 family.

The sequence is that of Small ribosomal subunit protein uS9 from Shigella dysenteriae serotype 1 (strain Sd197).